Here is a 49-residue protein sequence, read N- to C-terminus: Large ribosomal subunit protein bL33C (49 aa).

The protein belongs to the bacterial ribosomal protein bL33 family.

This is Large ribosomal subunit protein bL33C from Bacillus pumilus (strain SAFR-032).